A 404-amino-acid chain; its full sequence is Phosphopentomutase (404 aa).

Residues aspartate 10, aspartate 303, histidine 308, aspartate 344, histidine 345, and histidine 356 each contribute to the Mn(2+) site.

The protein belongs to the phosphopentomutase family. The cofactor is Mn(2+).

Its subcellular location is the cytoplasm. It carries out the reaction 2-deoxy-alpha-D-ribose 1-phosphate = 2-deoxy-D-ribose 5-phosphate. It catalyses the reaction alpha-D-ribose 1-phosphate = D-ribose 5-phosphate. It functions in the pathway carbohydrate degradation; 2-deoxy-D-ribose 1-phosphate degradation; D-glyceraldehyde 3-phosphate and acetaldehyde from 2-deoxy-alpha-D-ribose 1-phosphate: step 1/2. In terms of biological role, isomerase that catalyzes the conversion of deoxy-ribose 1-phosphate (dRib-1-P) and ribose 1-phosphate (Rib-1-P) to deoxy-ribose 5-phosphate (dRib-5-P) and ribose 5-phosphate (Rib-5-P), respectively. The chain is Phosphopentomutase from Shewanella baltica (strain OS185).